A 157-amino-acid polypeptide reads, in one-letter code: S-ribosylhomocysteine lyase (157 aa).

3 residues coordinate Fe cation: His-54, His-58, and Cys-126.

The protein belongs to the LuxS family. Homodimer. Requires Fe cation as cofactor.

It catalyses the reaction S-(5-deoxy-D-ribos-5-yl)-L-homocysteine = (S)-4,5-dihydroxypentane-2,3-dione + L-homocysteine. Functionally, involved in the synthesis of autoinducer 2 (AI-2) which is secreted by bacteria and is used to communicate both the cell density and the metabolic potential of the environment. The regulation of gene expression in response to changes in cell density is called quorum sensing. Catalyzes the transformation of S-ribosylhomocysteine (RHC) to homocysteine (HC) and 4,5-dihydroxy-2,3-pentadione (DPD). This Bacillus cereus (strain 03BB102) protein is S-ribosylhomocysteine lyase.